A 206-amino-acid chain; its full sequence is Ribosomal RNA small subunit methyltransferase G (206 aa).

Residues glycine 74, leucine 79, 125-126 (VE), and arginine 140 contribute to the S-adenosyl-L-methionine site.

The protein belongs to the methyltransferase superfamily. RNA methyltransferase RsmG family.

It is found in the cytoplasm. It carries out the reaction guanosine(527) in 16S rRNA + S-adenosyl-L-methionine = N(7)-methylguanosine(527) in 16S rRNA + S-adenosyl-L-homocysteine. Specifically methylates the N7 position of guanine in position 527 of 16S rRNA. This Shewanella amazonensis (strain ATCC BAA-1098 / SB2B) protein is Ribosomal RNA small subunit methyltransferase G.